A 657-amino-acid chain; its full sequence is Single-minded homolog 2 (657 aa).

The bHLH domain maps to 1-53; sequence MKEKSKNAAKTRREKENGEFYELAKLLPLPSAITSQLDKASIIRLTTSYLKMR. 2 PAS domains span residues 77–147 and 218–288; these read AKEL…PPLH and PPSA…LVKG. The PAC domain occupies 218–288; that stretch reads PPSAITEIKL…YAHHLLLVKG (71 aa). In terms of domain architecture, Single-minded C-terminal spans 336–657; that stretch reads EYKELQLSLD…GASVIITNGR (322 aa). Residues 354–364 show a composition bias toward polar residues; sequence ESWRTTLSTSQ. Disordered stretches follow at residues 354–387 and 612–641; these read ESWRTTLSTSQETRKSAKPKNTKMKTKLRTNPYP and LGSAAPGAPEAAGSLRPRHPGPVAASAPGA. Residues 367-386 carry the Nuclear localization signal motif; it reads RKSAKPKNTKMKTKLRTNPY. Positions 369–381 are enriched in basic residues; sequence SAKPKNTKMKTKL.

As to quaternary structure, efficient DNA binding requires dimerization with another bHLH protein. Heterodimer of SIM2 and ARNT. In terms of tissue distribution, transcripts were detected in high levels in kidney followed by skeletal muscle and lung. Low levels were found in testis, brain and heart. In early fetal development it is found in CNS, developing kidney, tongue epithelium and cartilage primordia.

The protein resides in the nucleus. Functionally, transcription factor that may be a master gene of CNS development in cooperation with Arnt. It may have pleiotropic effects in the tissues expressed during development. The sequence is that of Single-minded homolog 2 (Sim2) from Mus musculus (Mouse).